The chain runs to 173 residues: Photosystem I assembly protein Ycf3 (173 aa).

TPR repeat units lie at residues 35–68 (AYVY…EENA), 72–105 (GETL…NPKQ), and 120–153 (GRTA…NPGG).

This sequence belongs to the Ycf3 family.

It is found in the cellular thylakoid membrane. In terms of biological role, essential for the assembly of the photosystem I (PSI) complex. May act as a chaperone-like factor to guide the assembly of the PSI subunits. This Synechococcus sp. (strain CC9311) protein is Photosystem I assembly protein Ycf3.